Here is a 52-residue protein sequence, read N- to C-terminus: uncharacterized protein (52 aa).

Helical transmembrane passes span 4–24 (IIIP…ISLE) and 25–45 (MSIV…FLFV).

The protein localises to the cell membrane. This is an uncharacterized protein from Bacillus subtilis (strain 168).